Reading from the N-terminus, the 446-residue chain is ATP-dependent protease ATPase subunit HslU (446 aa).

Residues valine 18, 60 to 65 (GVGKTE), aspartate 259, glutamate 324, and arginine 396 contribute to the ATP site.

The protein belongs to the ClpX chaperone family. HslU subfamily. A double ring-shaped homohexamer of HslV is capped on each side by a ring-shaped HslU homohexamer. The assembly of the HslU/HslV complex is dependent on binding of ATP.

The protein resides in the cytoplasm. ATPase subunit of a proteasome-like degradation complex; this subunit has chaperone activity. The binding of ATP and its subsequent hydrolysis by HslU are essential for unfolding of protein substrates subsequently hydrolyzed by HslV. HslU recognizes the N-terminal part of its protein substrates and unfolds these before they are guided to HslV for hydrolysis. The chain is ATP-dependent protease ATPase subunit HslU from Acidovorax ebreus (strain TPSY) (Diaphorobacter sp. (strain TPSY)).